The following is a 187-amino-acid chain: UPF0301 protein YqgE (187 aa).

This sequence belongs to the UPF0301 (AlgH) family.

This chain is UPF0301 protein YqgE, found in Salmonella agona (strain SL483).